The sequence spans 475 residues: tRNA-2-methylthio-N(6)-dimethylallyladenosine synthase (475 aa).

Basic and acidic residues predominate over residues 1-10; the sequence is MQETTVKRDG. The tract at residues 1 to 22 is disordered; the sequence is MQETTVKRDGASPSDAGTPATT. The MTTase N-terminal domain occupies 27-144; the sequence is GKLYIRTFGC…LPDLIKRRRA (118 aa). Cysteine 36, cysteine 73, cysteine 107, cysteine 181, cysteine 185, and cysteine 188 together coordinate [4Fe-4S] cluster. The Radical SAM core domain maps to 167-400; the sequence is RVDGATAFVS…QALINQQAAA (234 aa). In terms of domain architecture, TRAM spans 403–466; sequence QGMIGTRQRV…TNSLRGRVAG (64 aa).

Belongs to the methylthiotransferase family. MiaB subfamily. In terms of assembly, monomer. The cofactor is [4Fe-4S] cluster.

The protein resides in the cytoplasm. It catalyses the reaction N(6)-dimethylallyladenosine(37) in tRNA + (sulfur carrier)-SH + AH2 + 2 S-adenosyl-L-methionine = 2-methylsulfanyl-N(6)-dimethylallyladenosine(37) in tRNA + (sulfur carrier)-H + 5'-deoxyadenosine + L-methionine + A + S-adenosyl-L-homocysteine + 2 H(+). In terms of biological role, catalyzes the methylthiolation of N6-(dimethylallyl)adenosine (i(6)A), leading to the formation of 2-methylthio-N6-(dimethylallyl)adenosine (ms(2)i(6)A) at position 37 in tRNAs that read codons beginning with uridine. The sequence is that of tRNA-2-methylthio-N(6)-dimethylallyladenosine synthase from Bordetella parapertussis (strain 12822 / ATCC BAA-587 / NCTC 13253).